Consider the following 530-residue polypeptide: CTP synthase (530 aa).

Residues 1-267 (MTKYVFVTGG…DDFVLNHFKM (267 aa)) are amidoligase domain. A CTP-binding site is contributed by S13. Position 13 (S13) interacts with UTP. 14 to 19 (SLGKGI) contacts ATP. Residue Y54 participates in L-glutamine binding. Residue D71 coordinates ATP. Residues D71 and E141 each contribute to the Mg(2+) site. Residues 148–150 (DIE), 188–193 (KTKPTQ), and K224 contribute to the CTP site. UTP contacts are provided by residues 188–193 (KTKPTQ) and K224. 240 to 242 (RDA) serves as a coordination point for ATP. The 239-residue stretch at 292–530 (KIALVGKYIE…LFKAFIGATM (239 aa)) folds into the Glutamine amidotransferase type-1 domain. G354 provides a ligand contact to L-glutamine. The Nucleophile; for glutamine hydrolysis role is filled by C381. L-glutamine is bound by residues 382–385 (LGMQ), E405, and R463. Residues H508 and E510 contribute to the active site.

This sequence belongs to the CTP synthase family. Homotetramer.

The enzyme catalyses UTP + L-glutamine + ATP + H2O = CTP + L-glutamate + ADP + phosphate + 2 H(+). It catalyses the reaction L-glutamine + H2O = L-glutamate + NH4(+). It carries out the reaction UTP + NH4(+) + ATP = CTP + ADP + phosphate + 2 H(+). It participates in pyrimidine metabolism; CTP biosynthesis via de novo pathway; CTP from UDP: step 2/2. With respect to regulation, allosterically activated by GTP, when glutamine is the substrate; GTP has no effect on the reaction when ammonia is the substrate. The allosteric effector GTP functions by stabilizing the protein conformation that binds the tetrahedral intermediate(s) formed during glutamine hydrolysis. Inhibited by the product CTP, via allosteric rather than competitive inhibition. Functionally, catalyzes the ATP-dependent amination of UTP to CTP with either L-glutamine or ammonia as the source of nitrogen. Regulates intracellular CTP levels through interactions with the four ribonucleotide triphosphates. The polypeptide is CTP synthase (Latilactobacillus sakei subsp. sakei (strain 23K) (Lactobacillus sakei subsp. sakei)).